We begin with the raw amino-acid sequence, 178 residues long: Crossover junction endodeoxyribonuclease RuvC (178 aa).

Residues Asp-11, Glu-71, and Asp-143 contribute to the active site. The Mg(2+) site is built by Asp-11, Glu-71, and Asp-143.

The protein belongs to the RuvC family. Homodimer which binds Holliday junction (HJ) DNA. The HJ becomes 2-fold symmetrical on binding to RuvC with unstacked arms; it has a different conformation from HJ DNA in complex with RuvA. In the full resolvosome a probable DNA-RuvA(4)-RuvB(12)-RuvC(2) complex forms which resolves the HJ. Mg(2+) is required as a cofactor.

It is found in the cytoplasm. The enzyme catalyses Endonucleolytic cleavage at a junction such as a reciprocal single-stranded crossover between two homologous DNA duplexes (Holliday junction).. The RuvA-RuvB-RuvC complex processes Holliday junction (HJ) DNA during genetic recombination and DNA repair. Endonuclease that resolves HJ intermediates. Cleaves cruciform DNA by making single-stranded nicks across the HJ at symmetrical positions within the homologous arms, yielding a 5'-phosphate and a 3'-hydroxyl group; requires a central core of homology in the junction. The consensus cleavage sequence is 5'-(A/T)TT(C/G)-3'. Cleavage occurs on the 3'-side of the TT dinucleotide at the point of strand exchange. HJ branch migration catalyzed by RuvA-RuvB allows RuvC to scan DNA until it finds its consensus sequence, where it cleaves and resolves the cruciform DNA. This is Crossover junction endodeoxyribonuclease RuvC from Neisseria meningitidis serogroup A / serotype 4A (strain DSM 15465 / Z2491).